A 564-amino-acid chain; its full sequence is Bifunctional protein CrtB/UppS (564 aa).

Asp329 is an active-site residue. Position 329 (Asp329) interacts with Mg(2+). Residues Gly330–Arg333, Trp334, His346, and Ser374–Glu376 each bind substrate. Asn377 serves as the catalytic Proton acceptor. Substrate-binding positions include Trp378, Arg380, Arg497, and Arg502–Ser504. Glu515 contributes to the Mg(2+) binding site.

The protein in the N-terminal section; belongs to the phytoene/squalene synthase family. This sequence in the C-terminal section; belongs to the UPP synthase family. As to quaternary structure, homodimer. Mg(2+) serves as cofactor.

It catalyses the reaction 2 (2E,6E,10E)-geranylgeranyl diphosphate = 15-cis-phytoene + 2 diphosphate. Its pathway is carotenoid biosynthesis; phytoene biosynthesis; all-trans-phytoene from geranylgeranyl diphosphate: step 1/1. Its function is as follows. Catalyzes the reaction from prephytoene diphosphate to phytoene. Catalyzes the condensation of isopentenyl diphosphate (IPP) with allylic pyrophosphates generating different type of terpenoids. This chain is Bifunctional protein CrtB/UppS (crtB/uppS3), found in Streptomyces coelicolor (strain ATCC BAA-471 / A3(2) / M145).